A 101-amino-acid polypeptide reads, in one-letter code: Large ribosomal subunit protein uL24 (101 aa).

It belongs to the universal ribosomal protein uL24 family. As to quaternary structure, part of the 50S ribosomal subunit.

Functionally, one of two assembly initiator proteins, it binds directly to the 5'-end of the 23S rRNA, where it nucleates assembly of the 50S subunit. One of the proteins that surrounds the polypeptide exit tunnel on the outside of the subunit. This is Large ribosomal subunit protein uL24 from Streptococcus sanguinis (strain SK36).